The primary structure comprises 346 residues: MGDRLLRAARGEVLDRPPVWMMRQAGRYMAAYRELQSKYTFKQRCEIPELAVEISLQPFRAFAPDGVILFSDILTPLEGMGIPFELVEHQGPIIDPPIRSQAQIERIRLLEPEESLPFIKTILSTLRREVEGKATLLGFVGSPWTLACYAVEGRSSKDYAHIKSLAFAQPPLLHQLLSKLADSIARYVIYQIEGGAQVVQLFDTWAGQLSPVDYECWALPYQKQIVDQVKARYPQVPLILYINGSAALLERVGKAGIDVFSLDWMSDMAEARARLGSLAVQGNLDPMVLLGSPEFIRQRTLEVIRKAGSRGHIMNLGHGIHPSTPEANVHYFFETVRQSAELIHLR.

Residues 23-27 (RQAGR), aspartate 72, tyrosine 149, threonine 204, and histidine 318 each bind substrate.

The protein belongs to the uroporphyrinogen decarboxylase family. Homodimer.

It localises to the cytoplasm. The enzyme catalyses uroporphyrinogen III + 4 H(+) = coproporphyrinogen III + 4 CO2. It participates in porphyrin-containing compound metabolism; protoporphyrin-IX biosynthesis; coproporphyrinogen-III from 5-aminolevulinate: step 4/4. Catalyzes the decarboxylation of four acetate groups of uroporphyrinogen-III to yield coproporphyrinogen-III. The protein is Uroporphyrinogen decarboxylase of Synechococcus sp. (strain JA-2-3B'a(2-13)) (Cyanobacteria bacterium Yellowstone B-Prime).